The primary structure comprises 185 residues: Large ribosomal subunit protein uL22 (185 aa).

This sequence belongs to the universal ribosomal protein uL22 family. In terms of assembly, part of the 50S ribosomal subunit.

This protein binds specifically to 23S rRNA. It makes multiple contacts with different domains of the 23S rRNA in the assembled 50S subunit and ribosome. In terms of biological role, the globular domain of the protein is located near the polypeptide exit tunnel on the outside of the subunit, while an extended beta-hairpin is found that lines the wall of the exit tunnel in the center of the 70S ribosome. This chain is Large ribosomal subunit protein uL22, found in Caldivirga maquilingensis (strain ATCC 700844 / DSM 13496 / JCM 10307 / IC-167).